The following is a 216-amino-acid chain: Adenylate kinase (216 aa).

13 to 18 (GAGKGT) provides a ligand contact to ATP. An NMP region spans residues 33 to 66 (TTGDALRANKDMDISDMDTEYDTPREYMEAGDLV). Residues Thr-34, Arg-39, 64–66 (DLV), 89–92 (GYPR), and Gln-96 contribute to the AMP site. The segment at 125–162 (GRRVCDDCGTNYHVEFNQPEEDGVCDECGGDLIQRDDD) is LID. Arg-126 serves as a coordination point for ATP. Residues Cys-129, Cys-132, Cys-149, and Cys-152 each coordinate Zn(2+). Residues Arg-159 and Arg-170 each contribute to the AMP site. Gln-198 is an ATP binding site.

Belongs to the adenylate kinase family. As to quaternary structure, monomer.

The protein resides in the cytoplasm. It carries out the reaction AMP + ATP = 2 ADP. It functions in the pathway purine metabolism; AMP biosynthesis via salvage pathway; AMP from ADP: step 1/1. In terms of biological role, catalyzes the reversible transfer of the terminal phosphate group between ATP and AMP. Plays an important role in cellular energy homeostasis and in adenine nucleotide metabolism. The protein is Adenylate kinase of Haloarcula marismortui (strain ATCC 43049 / DSM 3752 / JCM 8966 / VKM B-1809) (Halobacterium marismortui).